Consider the following 223-residue polypeptide: uncharacterized protein (223 aa).

Its subcellular location is the plastid. It localises to the chloroplast. This is an uncharacterized protein from Mesostigma viride (Green alga).